The sequence spans 162 residues: MTQFLIVVATVLVMELTAYSVHRWIMHGPLGWGWHKSHHEEHDHALEKNDLYGVVFAVLATILFTVGAYWWPVLWWIALGMTVYGLIYFILHDGLVHQRWPFRYIPRRGYFRRLYQAHRLHHAVEGRDHCVSFGFIYAPPVDKLKQDLKRSGVLRPQDERPS.

One can recognise a Fatty acid hydroxylase domain in the interval 8–135; that stretch reads VATVLVMELT…GRDHCVSFGF (128 aa).

It belongs to the sterol desaturase family.

The enzyme catalyses all-trans-beta-carotene + 4 reduced [2Fe-2S]-[ferredoxin] + 2 O2 + 4 H(+) = all-trans-zeaxanthin + 4 oxidized [2Fe-2S]-[ferredoxin] + 2 H2O. Its pathway is carotenoid biosynthesis; astaxanthin biosynthesis. Its function is as follows. Catalyzes the hydroxylation reaction from beta-carotene to zeaxanthin via beta-cryptoxanthin. The protein is Beta-carotene hydroxylase (crtZ) of Paracoccus sp. (strain PC1) (Alcaligenes sp. (strain PC1)).